A 155-amino-acid chain; its full sequence is MSRRGTAEEKTTKSDPIYRNRLVNMLVNRILKHGKKSLAYQIIYRAVKKIQQKTETNPLSVLRQAMRGVTPDIAVKARRVGGSTHQVPLEIGSTQGKALAIRWLLGASRKRPGRNMAFKLSSELVDAAKGSGDAIRKKEETHRMAEANRAFAHFR.

The protein belongs to the universal ribosomal protein uS7 family. Part of the 30S ribosomal subunit.

It localises to the plastid. Its subcellular location is the chloroplast. Functionally, one of the primary rRNA binding proteins, it binds directly to 16S rRNA where it nucleates assembly of the head domain of the 30S subunit. The protein is Small ribosomal subunit protein uS7cz/uS7cy (rps7-A) of Chloranthus spicatus (Chulantree).